The following is an 881-amino-acid chain: Mechanosensitive ion channel protein 5 (881 aa).

2 stretches are compositionally biased toward basic and acidic residues: residues 1-12 (MAAVDSTDRRDF) and 48-59 (DGEKGKNDKKGD). A disordered region spans residues 1–248 (MAAVDSTDRR…RNGFEEEEEE (248 aa)). Polar residues predominate over residues 115 to 145 (ELQSNTPPRPATASNTPRRGLTTISESSSPV). Residues 169–179 (EEGRNRDEAEV) show a composition bias toward basic and acidic residues. Phosphoserine is present on serine 231. A run of 6 helical transmembrane segments spans residues 265-285 (LSFWVFLEWISLVLIVTSLVC), 309-329 (VLVLICGRLVSSWIVRIIVFL), 349-369 (KSVQNCLWLGLVLLAWHFLFD), 387-407 (VLVCLLVALIIWLVKTILVKV), 642-662 (IINVVIGIIIIIIWLLILGIA), and 677-697 (VAFVFGNSCKTIFEAIIFLFV). A disordered region spans residues 861–881 (PTANPTSSDRIPPSWMQQRGP). The segment covering 864–881 (NPTSSDRIPPSWMQQRGP) has biased composition (polar residues).

This sequence belongs to the MscS (TC 1.A.23) family.

The protein resides in the membrane. Functionally, mechanosensitive channel that opens in response to stretch forces in the membrane lipid bilayer. This Arabidopsis thaliana (Mouse-ear cress) protein is Mechanosensitive ion channel protein 5 (MSL5).